The chain runs to 483 residues: Altronate oxidoreductase (483 aa).

An NAD(+)-binding site is contributed by 18-29 (IIQFGEGNFLRA).

It belongs to the mannitol dehydrogenase family. UxaB subfamily.

It carries out the reaction D-altronate + NAD(+) = keto-D-tagaturonate + NADH + H(+). The protein operates within carbohydrate metabolism; pentose and glucuronate interconversion. The polypeptide is Altronate oxidoreductase (Escherichia coli O17:K52:H18 (strain UMN026 / ExPEC)).